We begin with the raw amino-acid sequence, 139 residues long: MLIPKRTKYRKQHRPVRRGMSKGGNEIAFGDFGIQALAPAYVTNRQIEAARIAMTRYIKRGGRVWITIFPDRPLTKKPLGTRMGSGKGTPEFWIANVHPGRVMFEIGGVSEDVAREALRRAIDKLPMKCRVIAREGGDI.

The span at 1–20 (MLIPKRTKYRKQHRPVRRGM) shows a compositional bias: basic residues. The segment at 1-21 (MLIPKRTKYRKQHRPVRRGMS) is disordered.

Belongs to the universal ribosomal protein uL16 family. In terms of assembly, part of the 50S ribosomal subunit.

In terms of biological role, binds 23S rRNA and is also seen to make contacts with the A and possibly P site tRNAs. This Bifidobacterium adolescentis (strain ATCC 15703 / DSM 20083 / NCTC 11814 / E194a) protein is Large ribosomal subunit protein uL16.